A 28-amino-acid chain; its full sequence is Basic phospholipase A2 homolog BmatTX-II (28 aa).

As to quaternary structure, monomer. Expressed by the venom gland.

It localises to the secreted. In terms of biological role, snake venom phospholipase A2 homolog that lacks enzymatic activity. Shows high myotoxic activity, neutrophil activation (demonstrated by activation induction of IL-1beta production), and slight cytotoxicity against Jurkat (leukemia T) and SK-BR-3 (breast adenocarcinoma) tumor cell lines. A model of myotoxic mechanism has been proposed: an apo Lys49-PLA2 is activated by the entrance of a hydrophobic molecule (e.g. fatty acid) at the hydrophobic channel of the protein leading to a reorientation of a monomer. This reorientation causes a transition between 'inactive' to 'active' states, causing alignment of C-terminal and membrane-docking sites (MDoS) side-by-side and putting the membrane-disruption sites (MDiS) in the same plane, exposed to solvent and in a symmetric position for both monomers. The MDoS region stabilizes the toxin on membrane by the interaction of charged residues with phospholipid head groups. Subsequently, the MDiS region destabilizes the membrane with penetration of hydrophobic residues. This insertion causes a disorganization of the membrane, allowing an uncontrolled influx of ions (i.e. calcium and sodium), and eventually triggering irreversible intracellular alterations and cell death. This is Basic phospholipase A2 homolog BmatTX-II from Bothrops mattogrossensis (Pitviper).